The following is a 570-amino-acid chain: Proline--tRNA ligase (570 aa).

It belongs to the class-II aminoacyl-tRNA synthetase family. ProS type 1 subfamily. In terms of assembly, homodimer.

It is found in the cytoplasm. The enzyme catalyses tRNA(Pro) + L-proline + ATP = L-prolyl-tRNA(Pro) + AMP + diphosphate. In terms of biological role, catalyzes the attachment of proline to tRNA(Pro) in a two-step reaction: proline is first activated by ATP to form Pro-AMP and then transferred to the acceptor end of tRNA(Pro). As ProRS can inadvertently accommodate and process non-cognate amino acids such as alanine and cysteine, to avoid such errors it has two additional distinct editing activities against alanine. One activity is designated as 'pretransfer' editing and involves the tRNA(Pro)-independent hydrolysis of activated Ala-AMP. The other activity is designated 'posttransfer' editing and involves deacylation of mischarged Ala-tRNA(Pro). The misacylated Cys-tRNA(Pro) is not edited by ProRS. The protein is Proline--tRNA ligase of Geobacter metallireducens (strain ATCC 53774 / DSM 7210 / GS-15).